A 472-amino-acid polypeptide reads, in one-letter code: Collagenase 3 (472 aa).

The N-terminal stretch at 1–19 (MHPGVLAAFLFLSWTRCWS) is a signal peptide. The propeptide at 20 to 104 (LPVPNDDDDD…PRCGVPDVGE (85 aa)) is activation peptide. The short motif at 95–102 (PRCGVPDV) is the Cysteine switch element. Cys97 is a binding site for Zn(2+). Asn118 carries an N-linked (GlcNAc...) asparagine glycan. A Ca(2+)-binding site is contributed by Asp129. Residues Asn153 and Asn159 are each glycosylated (N-linked (GlcNAc...) asparagine). Residue Asp163 participates in Ca(2+) binding. Residues His173 and Asp175 each coordinate Zn(2+). An interaction with TIMP2 region spans residues 177–247 (YPFDGPSGLL…GALMFPIYTY (71 aa)). Ca(2+)-binding residues include Asp180, Gly181, Ser183, and Leu185. His188 serves as a coordination point for Zn(2+). The Ca(2+) site is built by Asn195, Gly197, and Asp199. A Zn(2+)-binding site is contributed by His201. Residues Asp203, Asp204, and Glu206 each coordinate Ca(2+). A Zn(2+)-binding site is contributed by His223. Glu224 is a catalytic residue. The Zn(2+) site is built by His227, His233, and Met241. The interaction with collagen stretch occupies residues 269-472 (PGDEDPNPKH…VMPTNSLLWC (204 aa)). 4 Hemopexin repeats span residues 282-331 (PDKC…WPEL), 332-378 (PNRI…GFPK), 380-428 (VKKI…FPGI), and 429-472 (GDKV…LLWC). Cys285 and Cys472 are oxidised to a cystine. Ca(2+) contacts are provided by Asp292, Ile294, Asp336, and Ala338. Tyr367 is subject to Phosphotyrosine; by PKDCC. Residues Ser384, Ala386, Asp433, and Val435 each coordinate Ca(2+).

Belongs to the peptidase M10A family. Ca(2+) serves as cofactor. The cofactor is Zn(2+). The proenzyme is activated by removal of the propeptide; this cleavage can be effected by other matrix metalloproteinases, such as MMP2, MMP3 and MMP14 and may involve several cleavage steps. Cleavage can also be autocatalytic, after partial maturation by another protease or after treatment with 4-aminophenylmercuric acetate (APMA) (in vitro). In terms of processing, N-glycosylated. Post-translationally, tyrosine phosphorylated by PKDCC/VLK. Seems to be specific to breast carcinomas.

Its subcellular location is the secreted. It is found in the extracellular space. It localises to the extracellular matrix. In terms of biological role, plays a role in the degradation of extracellular matrix proteins including fibrillar collagen, fibronectin, TNC and ACAN. Cleaves triple helical collagens, including type I, type II and type III collagen, but has the highest activity with soluble type II collagen. Can also degrade collagen type IV, type XIV and type X. May also function by activating or degrading key regulatory proteins, such as TGFB1 and CCN2. Plays a role in wound healing, tissue remodeling, cartilage degradation, bone development, bone mineralization and ossification. Required for normal embryonic bone development and ossification. Plays a role in the healing of bone fractures via endochondral ossification. Plays a role in wound healing, probably by a mechanism that involves proteolytic activation of TGFB1 and degradation of CCN2. Plays a role in keratinocyte migration during wound healing. May play a role in cell migration and in tumor cell invasion. In Equus caballus (Horse), this protein is Collagenase 3 (MMP13).